We begin with the raw amino-acid sequence, 258 residues long: F-box/SPRY domain-containing protein 1 (258 aa).

The F-box domain maps to 6-54 (TEYAPDIPDNVLELIFSYLKLQDLRNCALVCKSWHRFLSDENNEVWRAQ). Positions 64–256 (FKTDLLSVVP…ISMVYLGPPL (193 aa)) constitute a B30.2/SPRY domain.

It belongs to the FBXO45/Fsn family. Component of an E3 ubiquitin ligase complex composed of hiw and Fsn.

It is found in the synapse. Its pathway is protein modification; protein ubiquitination. Its function is as follows. Required in the presynaptic motoneuron to down-regulate the levels of wnd and restrain synaptic terminal growth at the neuromuscular junction (NMJ). The chain is F-box/SPRY domain-containing protein 1 from Culex quinquefasciatus (Southern house mosquito).